Consider the following 240-residue polypeptide: Ribonuclease HII (240 aa).

The region spanning 29–220 (EPIAGVDEAG…VRRAAGLEPL (192 aa)) is the RNase H type-2 domain. A divalent metal cation is bound by residues D35, E36, and D129.

Belongs to the RNase HII family. Mn(2+) serves as cofactor. The cofactor is Mg(2+).

It localises to the cytoplasm. It carries out the reaction Endonucleolytic cleavage to 5'-phosphomonoester.. Functionally, endonuclease that specifically degrades the RNA of RNA-DNA hybrids. The chain is Ribonuclease HII from Nocardioides sp. (strain ATCC BAA-499 / JS614).